The primary structure comprises 4660 residues: Low-density lipoprotein receptor-related protein 2 (4660 aa).

Positions Met1 to Ser25 are cleaved as a signal peptide. Over Gln26–Thr4425 the chain is Extracellular. LDL-receptor class A domains follow at residues Glu27–Pro63, Ser66–Ala104, Thr107–His143, Asn141–Thr180, Leu182–Asn218, and Thr221–Glu257. 18 disulfide bridges follow: Cys28–Cys40, Cys35–Cys53, Cys47–Cys62, Cys67–Cys80, Cys74–Cys93, Cys87–Cys103, Cys108–Cys120, Cys115–Cys133, Cys127–Cys142, Cys142–Cys157, Cys152–Cys170, Cys164–Cys179, Cys183–Cys195, Cys190–Cys208, Cys202–Cys217, Cys222–Cys234, Cys229–Cys247, and Cys241–Cys256. N-linked (GlcNAc...) asparagine glycosylation is found at Asn159 and Asn178. N-linked (GlcNAc...) asparagine glycosylation is present at Asn259. The region spanning Arg264 to Gly307 is the LDL-receptor class A 7 domain. 3 disulfides stabilise this stretch: Cys265–Cys278, Cys272–Cys291, and Cys285–Cys306. Asn299 and Asn340 each carry an N-linked (GlcNAc...) asparagine glycan. The EGF-like 1; calcium-binding domain maps to Asp347–Gln382. Intrachain disulfides connect Cys351-Cys361 and Cys357-Cys370. LDL-receptor class B repeat units lie at residues His435–Asn477, Asn478–Val520, Gly521–Ser567, and Lys568–His612. N-linked (GlcNAc...) asparagine glycosylation is present at Asn462. N-linked (GlcNAc...) asparagine glycosylation occurs at Asn657. LDL-receptor class B repeat units lie at residues Ser752 to Ser794, Arg795 to Ala836, Gly837 to Ala880, and Ser881 to Asn924. Residue Asn865 is glycosylated (N-linked (GlcNAc...) asparagine). The LDL-receptor class A 8 domain maps to Gln1024–Gly1060. Cystine bridges form between Cys1025/Cys1037, Cys1032/Cys1050, and Cys1044/Cys1059. The N-linked (GlcNAc...) asparagine glycan is linked to Asn1063. LDL-receptor class A domains lie at Thr1065 to Pro1102, Thr1109 to Gln1145, Thr1149 to Val1185, Asn1187 to Pro1224, Met1230 to Val1268, Thr1271 to Pro1307, and His1312 to Asn1350. Cystine bridges form between Cys1066–Cys1079, Cys1073–Cys1092, Cys1086–Cys1101, Cys1110–Cys1122, Cys1117–Cys1135, Cys1129–Cys1144, Cys1150–Cys1162, Cys1157–Cys1175, and Cys1169–Cys1184. Ca(2+) is bound by residues Trp1127, Asp1130, Asp1132, Asp1134, Asp1140, and Glu1141. The N-linked (GlcNAc...) asparagine glycan is linked to Asn1187. 18 cysteine pairs are disulfide-bonded: Cys1188-Cys1201, Cys1195-Cys1214, Cys1208-Cys1223, Cys1231-Cys1244, Cys1238-Cys1257, Cys1251-Cys1267, Cys1272-Cys1284, Cys1279-Cys1297, Cys1291-Cys1306, Cys1313-Cys1326, Cys1320-Cys1339, Cys1333-Cys1349, Cys1354-Cys1365, Cys1361-Cys1374, Cys1376-Cys1389, Cys1395-Cys1405, Cys1401-Cys1414, and Cys1416-Cys1429. Positions 1206, 1209, 1211, 1213, 1219, and 1220 each coordinate Ca(2+). N-linked (GlcNAc...) asparagine glycans are attached at residues Asn1328 and Asn1341. The 41-residue stretch at Asn1350–Glu1390 folds into the EGF-like 2 domain. Residue Asn1384 is glycosylated (N-linked (GlcNAc...) asparagine). In terms of domain architecture, EGF-like 3; calcium-binding spans Asp1391 to Lys1430. N-linked (GlcNAc...) asparagine glycans are attached at residues Asn1451, Asn1497, and Asn1551. 5 LDL-receptor class B repeats span residues Gly1479–Gly1521, Arg1522–Met1564, Asn1567–Asn1610, Arg1611–Phe1655, and Val1656–Ser1696. N-linked (GlcNAc...) asparagine glycans are attached at residues Asn1676, Asn1733, and Asn1811. 9 LDL-receptor class B repeats span residues Gln1791–Ser1833, Arg1834–Arg1883, Gly1884–Glu1931, Gln1932–Phe1973, Leu1974–Arg2014, Gly2108–Ala2157, Gly2158–His2202, Arg2203–Thr2246, and Gly2247–Ser2290. Asn2134, Asn2178, and Asn2225 each carry an N-linked (GlcNAc...) asparagine glycan. Asn2396 carries an N-linked (GlcNAc...) asparagine glycan. LDL-receptor class B repeat units follow at residues Asn2432–Asn2478, Arg2479–Arg2519, Gly2520–Thr2563, Asp2564–Tyr2605, and Ile2606–Thr2647. N-linked (GlcNAc...) asparagine glycans are attached at residues Asn2488 and Asn2548. 10 consecutive LDL-receptor class A domains span residues Arg2700–Ala2738, Thr2741–Leu2777, Asn2780–Pro2819, Thr2822–Ala2861, Thr2864–Gly2902, Thr2907–Glu2946, Asn2949–Thr2991, Thr2994–Ser3030, Pro3033–His3071, and Thr3076–Gly3112. Disulfide bonds link Cys2701-Cys2713, Cys2708-Cys2726, Cys2720-Cys2737, Cys2742-Cys2754, Cys2749-Cys2767, Cys2761-Cys2776, Cys2781-Cys2794, Cys2789-Cys2807, Cys2801-Cys2818, Cys2823-Cys2836, Cys2830-Cys2849, Cys2843-Cys2860, Cys2865-Cys2878, Cys2872-Cys2891, Cys2885-Cys2901, Cys2908-Cys2920, Cys2915-Cys2933, and Cys2927-Cys2945. Asn2782 is a glycosylation site (N-linked (GlcNAc...) asparagine). Asn2810 carries an N-linked (GlcNAc...) asparagine glycan. Asn2949 carries an N-linked (GlcNAc...) asparagine glycan. 18 disulfides stabilise this stretch: Cys2950-Cys2967, Cys2957-Cys2980, Cys2974-Cys2990, Cys2995-Cys3007, Cys3002-Cys3020, Cys3014-Cys3029, Cys3034-Cys3046, Cys3041-Cys3059, Cys3053-Cys3070, Cys3077-Cys3089, Cys3084-Cys3102, Cys3096-Cys3111, Cys3116-Cys3128, Cys3124-Cys3137, Cys3139-Cys3152, Cys3158-Cys3169, Cys3165-Cys3178, and Cys3180-Cys3193. N-linked (GlcNAc...) asparagine glycosylation is present at Asn2989. In terms of domain architecture, EGF-like 4 spans Gly3112 to Val3153. N-linked (GlcNAc...) asparagine glycosylation occurs at Asn3127. One can recognise an EGF-like 5; calcium-binding domain in the interval Asp3154–Arg3194. Residues Asn3213, Asn3259, Asn3317, and Asn3357 are each glycosylated (N-linked (GlcNAc...) asparagine). LDL-receptor class B repeat units lie at residues Lys3241–Ser3283, Arg3284–Arg3326, Gly3335–Asn3378, Asp3379–Thr3421, and Val3422–Tyr3462. The N-linked (GlcNAc...) asparagine glycan is linked to Asn3448. LDL-receptor class A domains follow at residues Met3513–Pro3551, Phe3554–Glu3592, Arg3595–Ala3633, Thr3636–Thr3674, Asn3679–Glu3717, Pro3720–Val3757, Glu3760–Glu3796, and Thr3799–Pro3835. Cystine bridges form between Cys3514–Cys3527, Cys3521–Cys3540, Cys3534–Cys3550, Cys3555–Cys3567, Cys3562–Cys3580, Cys3574–Cys3591, Cys3596–Cys3608, Cys3603–Cys3621, Cys3615–Cys3632, Cys3637–Cys3649, Cys3644–Cys3662, Cys3656–Cys3673, Cys3680–Cys3694, Cys3688–Cys3707, Cys3701–Cys3716, Cys3721–Cys3734, Cys3729–Cys3747, Cys3741–Cys3756, Cys3761–Cys3773, Cys3768–Cys3786, Cys3780–Cys3795, Cys3800–Cys3812, Cys3807–Cys3825, and Cys3819–Cys3834. The N-linked (GlcNAc...) asparagine glycan is linked to Asn3566. An N-linked (GlcNAc...) asparagine glycan is attached at Asn3682. A glycan (N-linked (GlcNAc...) asparagine) is linked at Asn3840. 3 consecutive LDL-receptor class A domains span residues Tyr3843 to Phe3881, Pro3884 to Arg3923, and Pro3929 to Asn3965. Disulfide bonds link Cys3844–Cys3856, Cys3851–Cys3869, Cys3863–Cys3880, Cys3885–Cys3898, Cys3893–Cys3911, Cys3905–Cys3922, Cys3930–Cys3942, Cys3937–Cys3955, and Cys3949–Cys3964. Positions Asp3968–Asp4003 constitute an EGF-like 6 domain. N-linked (GlcNAc...) asparagine glycans are attached at residues Asn3969 and Asn3980. 5 disulfide bridges follow: Cys3972–Cys3981, Cys3977–Cys3991, Cys4013–Cys4023, Cys4019–Cys4032, and Cys4034–Cys4049. In terms of domain architecture, EGF-like 7; calcium-binding spans Asp4009–Ala4050. N-linked (GlcNAc...) asparagine glycosylation is present at Asn4070. LDL-receptor class B repeat units lie at residues Arg4156–Leu4198, Gly4199–Asn4242, and Asp4244–Lys4285. Asn4329 carries N-linked (GlcNAc...) asparagine glycosylation. The EGF-like 8 domain occupies Met4379 to Glu4413. Cystine bridges form between Cys4383/Cys4391, Cys4385/Cys4401, and Cys4403/Cys4412. A helical transmembrane segment spans residues Met4426–Leu4446. Residues Phe4447 to Val4660 are Cytoplasmic-facing. Residues Ser4454–Pro4463 carry the SH3-binding motif. The PxLPxI/L motif 1; mediates interaction with ANKRA2 motif lies at Pro4457–Leu4462. Positions Pro4460 to Leu4465 match the PxLPxI/L motif 2; mediates interaction with ANKRA2 motif. 2 positions are modified to phosphoserine: Ser4464 and Ser4467. Residues Phe4522–Tyr4527 carry the Endocytosis signal motif. The tract at residues Asn4559–Glu4582 is disordered. Ser4577 carries the post-translational modification Phosphoserine. The interaction with DAB2 stretch occupies residues Gln4597–Asp4610. An NPXY motif motif is present at residues Asn4603–Tyr4606. Residues Tyr4606–Met4609 carry the SH2-binding motif. Residues Val4617–Val4660 are disordered. The short motif at Val4619 to Lys4630 is the SH3-binding element. Phosphoserine is present on Ser4624. Polar residues predominate over residues Arg4634–Glu4644. The residue at position 4637 (Thr4637) is a Phosphothreonine. Phosphoserine is present on Ser4658.

This sequence belongs to the LDLR family. In terms of assembly, binds plasminogen, extracellular matrix components, plasminogen activator-plasminogen activator inhibitor type I complex, apolipoprotein E-enriched beta-VLDL, lipoprotein lipase, lactoferrin, CLU/clusterin and calcium. Forms a multimeric complex together with LRPAP1. Interacts (via PxLPxI/L motif) with ANKRA2 (via ankyrin repeats). Interacts with LRP2BP. Interacts (via NPXY motif) with DAB2; the interaction is not affected by tyrosine phosphorylation of the NPXY motif. Interacts with MB. Interacts with BMP4. Interacts with the Sonic hedgehog protein N-product which is the active product of SHH. Interacts with CST3 in a calcium-dependent manner. Interacts with the vitamin-D binding protein GC/DBP. Interacts with sex hormone-binding protein SHBG. Interacts with angiotensin-2. Also interacts with angiotensin 1-7. Interacts with APOM. Interacts with selenoprotein SEPP1. Interacts with LEP. Interacts with ALB. Interacts with the antiapoptotic protein BIRC5/survivin. Interacts with matrix metalloproteinase MMP2 in complex with metalloproteinase inhibitor TIMP1. In neurons, forms a trimeric complex with APP and APPB1/FE65. Interacts with LDLRAP1/ARH; mediates trafficking of LRP2 to the endocytic recycling compartment. Does not interact with beta-amyloid protein 40 alone but interacts with the complex composed of beta-amyloid protein 40 and CLU/APOJ. Interacts with MDK. A fraction undergoes proteolytic cleavage of the extracellular domain at the cell membrane to generate a cytoplasmic tail fragment. This is internalized into the early endosome from where it trafficks in an LDLRAP1/ARH-dependent manner to the endocytic recycling compartment (ERC). In the ERC, it is further cleaved by gamma-secretase to release a fragment which translocates to the nucleus and mediates transcriptional repression. In terms of processing, N-glycosylation is required for ligand binding. As to expression, in the inner ear, expressed in the lumen of the endolymphatic sac where it localizes to macrophage-like cells as well as to mitochondria-rich and ribosome-rich epithelial cells (at protein level). In the inner ear, expressed in marginal cells of the stria vascularis, epithelial cells at the spiral prominence, epithelial cells of Reissner's membrane facing the cochlear duct, and Kolliker's organ (at protein level). Expressed in the choroid plexus epithelium in the brain (at protein level). In the brain, also expressed in astrocytes (at protein level). Expression also detected in epithelial cells of the kidney glomerulus and proximal tubule, lung, epididymis and yolk sac.

Its subcellular location is the apical cell membrane. It localises to the endosome lumen. The protein resides in the membrane. The protein localises to the clathrin-coated pit. It is found in the cell projection. Its subcellular location is the dendrite. It localises to the axon. Multiligand endocytic receptor. Acts together with CUBN to mediate endocytosis of high-density lipoproteins. Mediates receptor-mediated uptake of polybasic drugs such as aprotinin, aminoglycosides and polymyxin B. In the kidney, mediates the tubular uptake and clearance of leptin. Also mediates transport of leptin across the blood-brain barrier through endocytosis at the choroid plexus epithelium. Endocytosis of leptin in neuronal cells is required for hypothalamic leptin signaling and leptin-mediated regulation of feeding and body weight. Mediates endocytosis and subsequent lysosomal degradation of CST3 in kidney proximal tubule cells. Mediates renal uptake of 25-hydroxyvitamin D3 in complex with the vitamin D3 transporter GC/DBP. Mediates renal uptake of metallothionein-bound heavy metals. Together with CUBN, mediates renal reabsorption of myoglobin. Mediates renal uptake and subsequent lysosomal degradation of APOM. Plays a role in kidney selenium homeostasis by mediating renal endocytosis of selenoprotein SEPP1. Mediates renal uptake of the antiapoptotic protein BIRC5/survivin which may be important for functional integrity of the kidney. Mediates renal uptake of matrix metalloproteinase MMP2 in complex with metalloproteinase inhibitor TIMP1. Mediates endocytosis of Sonic hedgehog protein N-product (ShhN), the active product of SHH. Also mediates ShhN transcytosis. In the embryonic neuroepithelium, mediates endocytic uptake and degradation of BMP4, is required for correct SHH localization in the ventral neural tube and plays a role in patterning of the ventral telencephalon. Required at the onset of neurulation to sequester SHH on the apical surface of neuroepithelial cells of the rostral diencephalon ventral midline and to control PTCH1-dependent uptake and intracellular trafficking of SHH. During neurulation, required in neuroepithelial cells for uptake of folate bound to the folate receptor FOLR1 which is necessary for neural tube closure. In the adult brain, negatively regulates BMP signaling in the subependymal zone which enables neurogenesis to proceed. In astrocytes, mediates endocytosis of ALB which is required for the synthesis of the neurotrophic factor oleic acid. Involved in neurite branching. During optic nerve development, required for SHH-mediated migration and proliferation of oligodendrocyte precursor cells. Mediates endocytic uptake and clearance of SHH in the retinal margin which protects retinal progenitor cells from mitogenic stimuli and keeps them quiescent. Plays a role in reproductive organ development by mediating uptake in reproductive tissues of androgen and estrogen bound to the sex hormone binding protein SHBG. Mediates endocytosis of angiotensin-2. Also mediates endocytosis of angiotensin 1-7. Binds to the complex composed of beta-amyloid protein 40 and CLU/APOJ and mediates its endocytosis and lysosomal degradation. Required for embryonic heart development. Required for normal hearing, possibly through interaction with estrogen in the inner ear. The chain is Low-density lipoprotein receptor-related protein 2 (Lrp2) from Rattus norvegicus (Rat).